The chain runs to 712 residues: Polyribonucleotide nucleotidyltransferase (712 aa).

D487 and D493 together coordinate Mg(2+). Residues 554-613 enclose the KH domain; the sequence is PKIITMTINPDKIRDVIGPSGKQINKIIEETGVKIDIEQDGTVFISSINQEMNDKAKKII. Residues 623–691 enclose the S1 motif domain; that stretch reads GEIYEGKVKR…KQGRVNLSRK (69 aa).

The protein belongs to the polyribonucleotide nucleotidyltransferase family. It depends on Mg(2+) as a cofactor.

The protein resides in the cytoplasm. It carries out the reaction RNA(n+1) + phosphate = RNA(n) + a ribonucleoside 5'-diphosphate. In terms of biological role, involved in mRNA degradation. Catalyzes the phosphorolysis of single-stranded polyribonucleotides processively in the 3'- to 5'-direction. In Bacillus cereus (strain AH187), this protein is Polyribonucleotide nucleotidyltransferase.